The following is a 497-amino-acid chain: Early growth response protein 1-A (497 aa).

Low complexity predominate over residues 139–165 (SPSSAPSSSPSSSSSSSSSQSPPLSCS). Disordered stretches follow at residues 139 to 169 (SPSS…VQSN), 175 to 194 (YSAA…DHSP), and 286 to 309 (PSRM…YGCP). 3 C2H2-type zinc fingers span residues 306 to 330 (YGCP…IRIH), 336 to 358 (FQCR…IRTH), and 364 to 386 (FACD…TKIH). Residues 377–441 (DERKRHTKIH…SYPSPVHSSF (65 aa)) form a disordered region. Basic residues predominate over residues 381 to 391 (RHTKIHLRQKD). Low complexity predominate over residues 397–441 (ATPVSVASPVSSYSPSASTSYPSPVPTSYSSPVSSSYPSPVHSSF).

Belongs to the EGR C2H2-type zinc-finger protein family. As to expression, expressed in the presumptive mesoderm. In blastula embryos, expressed in the dorsal marginal zone, and at the onset of gastrulation expression is specific to the Spemann organizer. As gastrulation proceeds, expressed in a ring around the yolk plug. This expression is maintained in advanced gastrulae, with weak expression also extending into the dorsal midline. By the neurula stage, expression is excluded from the notochord. In late tailbud stages, expressed in two spots in the anterior forebrain, which are connected via a bridge of cells that also show expression.

Its subcellular location is the nucleus. It is found in the cytoplasm. Its function is as follows. Transcriptional regulator. Recognizes and binds to the DNA sequence 5'-GCG(T/G)GGGCG-3'(EGR-site) in the promoter region of target genes. Binds double-stranded target DNA, irrespective of the cytosine methylation status. Regulates the transcription of numerous target genes, and thereby plays an important role in regulating the response to growth factors, DNA damage, and ischemia. Plays a role in the regulation of cell survival, proliferation and cell death. Mediates responses to ischemia and hypoxia; regulates the expression of proteins that are involved in inflammatory processes. Plays a role in regulating the expression of circadian clock genes. This Xenopus laevis (African clawed frog) protein is Early growth response protein 1-A (egr1-a).